A 367-amino-acid polypeptide reads, in one-letter code: tRNA-specific 2-thiouridylase MnmA (367 aa).

ATP is bound by residues 13–20 (GLSGGVDS) and Met-39. The segment at 99 to 101 (NPD) is interaction with target base in tRNA. Cys-104 acts as the Nucleophile in catalysis. The cysteines at positions 104 and 200 are disulfide-linked. Gly-128 provides a ligand contact to ATP. The interval 150-152 (KDQ) is interaction with tRNA. Cys-200 functions as the Cysteine persulfide intermediate in the catalytic mechanism. Residues 307–308 (RY) are interaction with tRNA.

It belongs to the MnmA/TRMU family.

The protein resides in the cytoplasm. It carries out the reaction S-sulfanyl-L-cysteinyl-[protein] + uridine(34) in tRNA + AH2 + ATP = 2-thiouridine(34) in tRNA + L-cysteinyl-[protein] + A + AMP + diphosphate + H(+). Functionally, catalyzes the 2-thiolation of uridine at the wobble position (U34) of tRNA, leading to the formation of s(2)U34. In Neisseria meningitidis serogroup C (strain 053442), this protein is tRNA-specific 2-thiouridylase MnmA.